The primary structure comprises 423 residues: AP-1 complex subunit mu-2 (423 aa).

The 254-residue stretch at 168–421 (KNEVFIDVIE…ITQSGDYQLR (254 aa)) folds into the MHD domain.

Belongs to the adaptor complexes medium subunit family. Adaptor protein complex 1 (AP-1) is a heterotetramer composed of two large adaptins (gamma-type subunit AP1G1 and beta-type subunit AP1B1), a medium adaptin (mu-type subunit AP1M1 or AP1M2) and a small adaptin (sigma-type subunit AP1S1 or AP1S2 or AP1S3). Interacts with P2X4. Phosphorylation of membrane-bound AP1M1/AP1M2 increases its affinity for sorting signals.

It localises to the golgi apparatus. The protein resides in the cytoplasmic vesicle. Its subcellular location is the clathrin-coated vesicle membrane. Subunit of clathrin-associated adaptor protein complex 1 that plays a role in protein sorting in the trans-Golgi network (TGN) and endosomes. The AP complexes mediate the recruitment of clathrin to membranes and the recognition of sorting signals within the cytosolic tails of transmembrane cargo molecules. In Mus musculus (Mouse), this protein is AP-1 complex subunit mu-2 (Ap1m2).